A 346-amino-acid chain; its full sequence is tRNA/tmRNA (uracil-C(5))-methyltransferase (346 aa).

Residues Q168, Y197, N202, E218, and D278 each contribute to the S-adenosyl-L-methionine site. C303 acts as the Nucleophile in catalysis. E337 acts as the Proton acceptor in catalysis.

This sequence belongs to the class I-like SAM-binding methyltransferase superfamily. RNA M5U methyltransferase family. TrmA subfamily.

The catalysed reaction is uridine(54) in tRNA + S-adenosyl-L-methionine = 5-methyluridine(54) in tRNA + S-adenosyl-L-homocysteine + H(+). It carries out the reaction uridine(341) in tmRNA + S-adenosyl-L-methionine = 5-methyluridine(341) in tmRNA + S-adenosyl-L-homocysteine + H(+). In terms of biological role, dual-specificity methyltransferase that catalyzes the formation of 5-methyluridine at position 54 (m5U54) in all tRNAs, and that of position 341 (m5U341) in tmRNA (transfer-mRNA). This chain is tRNA/tmRNA (uracil-C(5))-methyltransferase, found in Campylobacter lari (strain RM2100 / D67 / ATCC BAA-1060).